A 247-amino-acid polypeptide reads, in one-letter code: 5'-nucleotidase SurE (247 aa).

4 residues coordinate a divalent metal cation: Asp8, Asp9, Ser39, and Asn91.

This sequence belongs to the SurE nucleotidase family. A divalent metal cation is required as a cofactor.

Its subcellular location is the cytoplasm. It catalyses the reaction a ribonucleoside 5'-phosphate + H2O = a ribonucleoside + phosphate. In terms of biological role, nucleotidase that shows phosphatase activity on nucleoside 5'-monophosphates. The polypeptide is 5'-nucleotidase SurE (Nitrosomonas europaea (strain ATCC 19718 / CIP 103999 / KCTC 2705 / NBRC 14298)).